The primary structure comprises 973 residues: Ras-related protein Rab-44 (973 aa).

Over residues 1–21 the composition is skewed to basic residues; that stretch reads MEKGKGVSRKGRKLASSRRRQ. The segment at 1 to 42 is disordered; that stretch reads MEKGKGVSRKGRKLASSRRRQAREPADGQDAPVAAEAESWPS. The EF-hand domain occupies 77–111; the sequence is GGEEPQMIFDWVDVESRGHLSLEEFSSGLKNVFGS. Residues 112–140 are disordered; it reads SPGTHRLRTKRSLPSQRESVTSTLPVPEE. The span at 123 to 135 shows a compositional bias: polar residues; sequence SLPSQRESVTSTL. Residues 219-310 are a coiled coil; that stretch reads LYKVRQLYEE…ERDLAGQLEE (92 aa). Disordered regions lie at residues 319 to 368, 421 to 481, 493 to 708, and 724 to 779; these read RGHL…FGNN, FSQE…GSFL, GTVE…GLAV, and EAQP…GKPQ. The segment covering 428-440 has biased composition (pro residues); that stretch reads DPDPGPRGSPEVP. Positions 445–457 are enriched in basic and acidic residues; it reads KDGKGVEDPKGQD. The segment covering 513 to 524 has biased composition (low complexity); sequence GLSSSPQSPAGS. Composition is skewed to basic and acidic residues over residues 548–559, 598–608, and 654–663; these read SLEREVMAEDLK, HLARQESHAKG, and SESHGLEARS. A compositionally biased stretch (polar residues) spans 665–680; it reads ESPQQDDPLPNTSQPP. Positions 750 to 766 are enriched in basic and acidic residues; the sequence is AESRPEDPRTDLQEAER. GTP-binding positions include 792–799, 840–844, and 898–901; these read GDSNVGKT, DTAGQ, and NKMD. 2 S-geranylgeranyl cysteine lipidation sites follow: Cys-971 and Cys-972.

The protein belongs to the small GTPase superfamily. Rab family.

It localises to the cell membrane. This is Ras-related protein Rab-44 (Rab44) from Mus musculus (Mouse).